The following is a 166-amino-acid chain: Large ribosomal subunit protein uL11 (166 aa).

Belongs to the universal ribosomal protein uL11 family. As to quaternary structure, part of the ribosomal stalk of the 50S ribosomal subunit. Interacts with L10 and the large rRNA to form the base of the stalk. L10 forms an elongated spine to which L12 dimers bind in a sequential fashion forming a multimeric L10(L12)X complex.

Functionally, forms part of the ribosomal stalk which helps the ribosome interact with GTP-bound translation factors. The protein is Large ribosomal subunit protein uL11 of Methanopyrus kandleri (strain AV19 / DSM 6324 / JCM 9639 / NBRC 100938).